Reading from the N-terminus, the 159-residue chain is Ribosomal RNA large subunit methyltransferase H (159 aa).

S-adenosyl-L-methionine-binding positions include Gly108 and 127-132 (FSKMTF).

Belongs to the RNA methyltransferase RlmH family. As to quaternary structure, homodimer.

It localises to the cytoplasm. It carries out the reaction pseudouridine(1915) in 23S rRNA + S-adenosyl-L-methionine = N(3)-methylpseudouridine(1915) in 23S rRNA + S-adenosyl-L-homocysteine + H(+). Functionally, specifically methylates the pseudouridine at position 1915 (m3Psi1915) in 23S rRNA. The protein is Ribosomal RNA large subunit methyltransferase H of Clostridium perfringens (strain ATCC 13124 / DSM 756 / JCM 1290 / NCIMB 6125 / NCTC 8237 / Type A).